Consider the following 207-residue polypeptide: Ribosomal RNA large subunit methyltransferase E (207 aa).

S-adenosyl-L-methionine is bound by residues Gly60, Trp62, Asp80, Asp96, and Asp121. Lys161 functions as the Proton acceptor in the catalytic mechanism.

Belongs to the class I-like SAM-binding methyltransferase superfamily. RNA methyltransferase RlmE family.

Its subcellular location is the cytoplasm. It catalyses the reaction uridine(2552) in 23S rRNA + S-adenosyl-L-methionine = 2'-O-methyluridine(2552) in 23S rRNA + S-adenosyl-L-homocysteine + H(+). Specifically methylates the uridine in position 2552 of 23S rRNA at the 2'-O position of the ribose in the fully assembled 50S ribosomal subunit. This Pseudomonas paraeruginosa (strain DSM 24068 / PA7) (Pseudomonas aeruginosa (strain PA7)) protein is Ribosomal RNA large subunit methyltransferase E.